A 200-amino-acid chain; its full sequence is Recombination protein RecR (200 aa).

The C4-type zinc-finger motif lies at 59 to 74; it reads CSTCGSLDTQDPCAIC. A Toprim domain is found at 82–177; sequence SLICVVEEVG…TVSMLARGVP (96 aa).

It belongs to the RecR family.

May play a role in DNA repair. It seems to be involved in an RecBC-independent recombinational process of DNA repair. It may act with RecF and RecO. In Phenylobacterium zucineum (strain HLK1), this protein is Recombination protein RecR.